Here is a 77-residue protein sequence, read N- to C-terminus: MVPYTETSICLTNVPCGYMNVSGCFKGADALTILHECDEANVYTATFWSTSSGTRRNSAVICTLIANLMAFFMLLTM.

The chain crosses the membrane as a helical span at residues N57–T76.

The protein localises to the membrane. This is an uncharacterized protein from Schizosaccharomyces pombe (strain 972 / ATCC 24843) (Fission yeast).